Reading from the N-terminus, the 555-residue chain is Putative ankyrin repeat protein L283 (555 aa).

ANK repeat units follow at residues 364–389 (TKVNNIHQFIQKDEFKSAQKLLEDDI), 390–420 (VFKKVVDTAIKSNNQKTIKYLIDQQQFDINE), 422–447 (IKLALEENKLDIFNMLRLFNFDKVRC), and 455–488 (GYLEIVDKMMENDFEKINGDLVNIVLRNAAEGGK).

The protein is Putative ankyrin repeat protein L283 of Acanthamoeba polyphaga mimivirus (APMV).